Consider the following 547-residue polypeptide: Chaperonin GroEL (547 aa).

Residues T30–P33, K51, D87–T91, G415, and D495 contribute to the ATP site.

This sequence belongs to the chaperonin (HSP60) family. Forms a cylinder of 14 subunits composed of two heptameric rings stacked back-to-back. Interacts with the co-chaperonin GroES.

Its subcellular location is the cytoplasm. The catalysed reaction is ATP + H2O + a folded polypeptide = ADP + phosphate + an unfolded polypeptide.. In terms of biological role, together with its co-chaperonin GroES, plays an essential role in assisting protein folding. The GroEL-GroES system forms a nano-cage that allows encapsulation of the non-native substrate proteins and provides a physical environment optimized to promote and accelerate protein folding. This Shewanella halifaxensis (strain HAW-EB4) protein is Chaperonin GroEL.